Consider the following 525-residue polypeptide: GMP synthase [glutamine-hydrolyzing] (525 aa).

A Glutamine amidotransferase type-1 domain is found at 9 to 207 (RILILDFGSQ…ILDICECEAL (199 aa)). Cys-86 serves as the catalytic Nucleophile. Catalysis depends on residues His-181 and Glu-183. Residues 208–400 (WTPSKIAEDA…LGLPYDMVYR (193 aa)) enclose the GMPS ATP-PPase domain. 235–241 (SGGVDSS) serves as a coordination point for ATP.

As to quaternary structure, homodimer.

The catalysed reaction is XMP + L-glutamine + ATP + H2O = GMP + L-glutamate + AMP + diphosphate + 2 H(+). The protein operates within purine metabolism; GMP biosynthesis; GMP from XMP (L-Gln route): step 1/1. Its function is as follows. Catalyzes the synthesis of GMP from XMP. The chain is GMP synthase [glutamine-hydrolyzing] from Pseudomonas fluorescens (strain SBW25).